The chain runs to 369 residues: Bi-functional coumaroyl CoA and feruloyl CoA ortho-hydroxylase Diox1 (369 aa).

Positions 209 to 319 (IREPMLVGSR…RISVPLFVNP (111 aa)) constitute a Fe2OG dioxygenase domain. Tyrosine 225 provides a ligand contact to 2-oxoglutarate. Fe cation is bound by residues histidine 240, aspartate 242, and histidine 300. Residues arginine 310 and serine 312 each coordinate 2-oxoglutarate.

It belongs to the iron/ascorbate-dependent oxidoreductase family. Requires L-ascorbate as cofactor. Fe(2+) serves as cofactor.

The catalysed reaction is (E)-4-coumaroyl-CoA + 2-oxoglutarate + O2 = (E)-2,4-dihydroxycinnamoyl-CoA + succinate + CO2. It carries out the reaction (E)-feruloyl-CoA + 2-oxoglutarate + O2 = (E)-6-hydroxyferuloyl-CoA + succinate + CO2. It participates in phenylpropanoid metabolism. 2-oxoglutarate (OG)- and Fe(II)-dependent dioxygenase (2OGD) involved in scopoletin and umbelliferone biosynthesis. Converts feruloyl CoA into 6'-hydroxyferuloyl CoA, and p-coumaroyl CoA into 2,4-dihydroxycinnamoyl-CoA. The polypeptide is Bi-functional coumaroyl CoA and feruloyl CoA ortho-hydroxylase Diox1 (Ruta graveolens (Common rue)).